An 804-amino-acid polypeptide reads, in one-letter code: Phenylalanine--tRNA ligase beta subunit (804 aa).

One can recognise a tRNA-binding domain in the interval 39–147; that stretch reads GPSFSNVVVA…PNLPLGEDLA (109 aa). The 79-residue stretch at 402 to 480 folds into the B5 domain; that stretch reads ETVGEIHLRC…RIHGYDNIPV (79 aa). 4 residues coordinate Mg(2+): Asp-458, Asp-464, Glu-467, and Glu-468. Residues 711 to 804 form the FDX-ACB domain; it reads SRYPESSRDV…IIDQTGARVR (94 aa).

Belongs to the phenylalanyl-tRNA synthetase beta subunit family. Type 1 subfamily. As to quaternary structure, tetramer of two alpha and two beta subunits. The cofactor is Mg(2+).

It is found in the cytoplasm. The enzyme catalyses tRNA(Phe) + L-phenylalanine + ATP = L-phenylalanyl-tRNA(Phe) + AMP + diphosphate + H(+). The protein is Phenylalanine--tRNA ligase beta subunit of Syntrophus aciditrophicus (strain SB).